The sequence spans 395 residues: Putative phosphatidate cytidylyltransferase (395 aa).

A run of 9 helical transmembrane segments spans residues 13–33 (STVFVVLLIVFCFFLMFSAFA), 78–98 (FAFGLVIVLFISVIAVLMNWE), 115–135 (SLLSGIMVSGGMIPTFFVIYF), 144–164 (WIWTASFAGMIVFLWAVYMIS), 177–197 (IYSLGAVICFIACIGTIYFSV), 201–221 (WTTIFLLIAIGVCTDTFAYLF), 242–262 (AFFGVTGTVLTISIICVLYSI), 306–326 (FYIYWWVSTLALIFTASIFAI), and 358–378 (FDSSSFLISFFFIYHVIAGIS).

This sequence belongs to the CDS family.

It is found in the cell membrane. It catalyses the reaction a 1,2-diacyl-sn-glycero-3-phosphate + CTP + H(+) = a CDP-1,2-diacyl-sn-glycerol + diphosphate. The protein operates within phospholipid metabolism; CDP-diacylglycerol biosynthesis; CDP-diacylglycerol from sn-glycerol 3-phosphate: step 3/3. The sequence is that of Putative phosphatidate cytidylyltransferase (cdsA) from Mycoplasma pneumoniae (strain ATCC 29342 / M129 / Subtype 1) (Mycoplasmoides pneumoniae).